We begin with the raw amino-acid sequence, 130 residues long: Lysozyme C (130 aa).

In terms of domain architecture, C-type lysozyme spans 1–130; sequence KTYERCELAR…VSPWIRDCGL (130 aa). 4 cysteine pairs are disulfide-bonded: Cys-6–Cys-128, Cys-30–Cys-116, Cys-65–Cys-81, and Cys-77–Cys-95. Residues Glu-35 and Asp-53 contribute to the active site.

The protein belongs to the glycosyl hydrolase 22 family. Monomer.

It localises to the secreted. The catalysed reaction is Hydrolysis of (1-&gt;4)-beta-linkages between N-acetylmuramic acid and N-acetyl-D-glucosamine residues in a peptidoglycan and between N-acetyl-D-glucosamine residues in chitodextrins.. In terms of biological role, lysozymes have primarily a bacteriolytic function; those in tissues and body fluids are associated with the monocyte-macrophage system and enhance the activity of immunoagents. The polypeptide is Lysozyme C (LYZ) (Chelonia mydas (Green sea-turtle)).